We begin with the raw amino-acid sequence, 92 residues long: Small ribosomal subunit protein bS20 (92 aa).

The tract at residues 1–20 is disordered; that stretch reads MANIASAKKRARQAENNRAH.

Belongs to the bacterial ribosomal protein bS20 family.

Binds directly to 16S ribosomal RNA. The sequence is that of Small ribosomal subunit protein bS20 from Methylococcus capsulatus (strain ATCC 33009 / NCIMB 11132 / Bath).